We begin with the raw amino-acid sequence, 1358 residues long: DNA-directed RNA polymerase subunit beta (1358 aa).

This sequence belongs to the RNA polymerase beta chain family. In terms of assembly, the RNAP catalytic core consists of 2 alpha, 1 beta, 1 beta' and 1 omega subunit. When a sigma factor is associated with the core the holoenzyme is formed, which can initiate transcription.

It carries out the reaction RNA(n) + a ribonucleoside 5'-triphosphate = RNA(n+1) + diphosphate. DNA-dependent RNA polymerase catalyzes the transcription of DNA into RNA using the four ribonucleoside triphosphates as substrates. In Azotobacter vinelandii (strain DJ / ATCC BAA-1303), this protein is DNA-directed RNA polymerase subunit beta.